Here is a 324-residue protein sequence, read N- to C-terminus: Histidine N-acetyltransferase (324 aa).

One can recognise an N-acetyltransferase domain in the interval 15–151 (FEFVLAAEKE…GILLLSFNAP (137 aa)).

The enzyme catalyses L-histidine + acetyl-CoA = N(alpha)-acetyl-L-histidine + CoA + H(+). Enzyme responsible for the N-acetyl-histidine (NAH) synthesis, which is a major constituent of brain and lens of ectothermic vertebrates. This chain is Histidine N-acetyltransferase (hisat), found in Xenopus tropicalis (Western clawed frog).